The primary structure comprises 71 residues: uncharacterized protein (71 aa).

This is an uncharacterized protein from Bacillus subtilis (strain 168).